The sequence spans 343 residues: NADH dehydrogenase [ubiquinone] 1 alpha subcomplex subunit 10, mitochondrial (343 aa).

The N-terminal 23 residues, 1–23, are a transit peptide targeting the mitochondrion; it reads MALRLLRLVPPRVGGIHTSVQFK. An N6-acetyllysine; alternate modification is found at Lys110. At Lys110 the chain carries N6-succinyllysine; alternate. Ser238 carries the post-translational modification Phosphoserine; by PINK1.

It belongs to the complex I NDUFA10 subunit family. In terms of assembly, complex I is composed of 45 different subunits. This a component of the hydrophobic protein fraction. FAD serves as cofactor. Phosphorylation at Ser-238 by PINK1 is required for the binding and/or reduction of the complex I substrate ubiquinone.

It localises to the mitochondrion matrix. Its function is as follows. Accessory subunit of the mitochondrial membrane respiratory chain NADH dehydrogenase (Complex I), that is believed not to be involved in catalysis. Complex I functions in the transfer of electrons from NADH to the respiratory chain. The immediate electron acceptor for the enzyme is believed to be ubiquinone. In Bos taurus (Bovine), this protein is NADH dehydrogenase [ubiquinone] 1 alpha subcomplex subunit 10, mitochondrial (NDUFA10).